The sequence spans 231 residues: 2,3-bisphosphoglycerate-dependent phosphoglycerate mutase (231 aa).

Substrate-binding positions include 10-17, 23-24, Arg-62, 89-92, Lys-100, 116-117, and 185-186; these read RHGQSEWN, TG, ERHY, RR, and GN. The active-site Tele-phosphohistidine intermediate is the His-11. Glu-89 (proton donor/acceptor) is an active-site residue.

It belongs to the phosphoglycerate mutase family. BPG-dependent PGAM subfamily. Homodimer.

It catalyses the reaction (2R)-2-phosphoglycerate = (2R)-3-phosphoglycerate. It participates in carbohydrate degradation; glycolysis; pyruvate from D-glyceraldehyde 3-phosphate: step 3/5. Its function is as follows. Catalyzes the interconversion of 2-phosphoglycerate and 3-phosphoglycerate. This is 2,3-bisphosphoglycerate-dependent phosphoglycerate mutase from Buchnera aphidicola subsp. Acyrthosiphon pisum (strain APS) (Acyrthosiphon pisum symbiotic bacterium).